Reading from the N-terminus, the 478-residue chain is Solute carrier family 49 member 4 (478 aa).

The segment at 1–27 (MGSGWSSEEEERQPLLGPGLGPAPGAA) is disordered. Over 1 to 51 (MGSGWSSEEEERQPLLGPGLGPAPGAARRGREATAVLPAAGPNPGRVYGRR) the chain is Cytoplasmic. A Di-leucine motif; mediates lysosomal localization motif is present at residues 15 to 16 (LL). Residues 52–72 (WLVLLLFSLLAFAQGLVWNTW) traverse the membrane as a helical segment. Residues 73-89 (GPIQNSARQAYGFSGWD) are Lumenal-facing. Residues 90–110 (IALLVLWGPIGFLPCFAFMWL) form a helical membrane-spanning segment. Over 111–117 (LDKRGLR) the chain is Cytoplasmic. Residues 118 to 138 (VTVLLTSFLMVLGTGLRCIPV) form a helical membrane-spanning segment. The Lumenal portion of the chain corresponds to 139 to 152 (SDLALKKRLIHGGQ). A helical transmembrane segment spans residues 153 to 173 (ILNGLAGPTVMNAAPFLSTTW). Topologically, residues 174-184 (FSADERATATA) are cytoplasmic. Residues 185-205 (IASMLSYLGGACAFLVGPLVV) traverse the membrane as a helical segment. At 206 to 229 (PAPNGTAPLLAAESSRAHIKDRIE) the chain is on the lumenal side. The N-linked (GlcNAc...) asparagine glycan is linked to Asn209. A helical membrane pass occupies residues 230-250 (TVLYAEFGVVCLIFSATLAYF). Residues 251–281 (PPRPPLPPSVAAASQRLSYRRSFCRLLSNLR) lie on the Cytoplasmic side of the membrane. The helical transmembrane segment at 282-302 (FLMIALAYAIPLGVFAGWSGV) threads the bilayer. Residues 303–314 (LDLILTPVHVSQ) lie on the Lumenal side of the membrane. A helical membrane pass occupies residues 315–335 (VDAGWIGFWSIVGGCVVGIAM). Topologically, residues 336–347 (ARFADFIRGMLK) are cytoplasmic. A helical transmembrane segment spans residues 348–368 (LILLLLFSGATLSSTWFTLTC). Topologically, residues 369-384 (LNSITHLPLTTVTLYA) are lumenal. The helical transmembrane segment at 385 to 405 (SCILLGVFLNSSVPIFFELFV) threads the bilayer. At 406–414 (ETVYPVPEG) the chain is on the cytoplasmic side. Residues 415-435 (ITCGVVTFLSNMFMGVLLFFV) traverse the membrane as a helical segment. Over 436–442 (TFYHTEL) the chain is Lumenal. Residues 443–463 (SWFNWCLPGSCLLSLLLILCF) traverse the membrane as a helical segment. The Cytoplasmic segment spans residues 464-478 (RESYDRLYLDVVVSV).

Belongs to the major facilitator superfamily. Cleaved in lysosomes by cathepsin L between Leu-214 and Ala-261, generating a N-glycosylated N-terminal and a non-glycosylated C-terminal fragment.

The protein localises to the lysosome membrane. The catalysed reaction is pyridoxine(out) + n H(+)(out) = pyridoxine(in) + n H(+)(in). Its function is as follows. Mediates H(+)-dependent pyridoxine transport. The sequence is that of Solute carrier family 49 member 4 (Slc49a4) from Mus musculus (Mouse).